Here is a 354-residue protein sequence, read N- to C-terminus: DNA polymerase IV 2 (354 aa).

The 181-residue stretch at 4–184 (IIHIDMDAFY…LPVKKFHGVG (181 aa)) folds into the UmuC domain. Positions 8 and 102 each coordinate Mg(2+). Glu103 is an active-site residue.

The protein belongs to the DNA polymerase type-Y family. As to quaternary structure, monomer. The cofactor is Mg(2+).

The protein localises to the cytoplasm. It carries out the reaction DNA(n) + a 2'-deoxyribonucleoside 5'-triphosphate = DNA(n+1) + diphosphate. In terms of biological role, poorly processive, error-prone DNA polymerase involved in untargeted mutagenesis. Copies undamaged DNA at stalled replication forks, which arise in vivo from mismatched or misaligned primer ends. These misaligned primers can be extended by PolIV. Exhibits no 3'-5' exonuclease (proofreading) activity. May be involved in translesional synthesis, in conjunction with the beta clamp from PolIII. This is DNA polymerase IV 2 (dinB2) from Rhizobium meliloti (strain 1021) (Ensifer meliloti).